A 345-amino-acid chain; its full sequence is cAMP-responsive element modulator (345 aa).

A KID domain is found at Val-88 to Gly-147. A phosphoserine mark is found at Ser-102, Ser-129, Ser-271, Ser-274, and Ser-277. A bZIP domain is found at Thr-286 to Tyr-345. The basic motif stretch occupies residues Arg-287–Lys-312. The leucine-zipper stretch occupies residues Leu-314–Leu-335.

The protein belongs to the bZIP family. In terms of assembly, binds DNA as a dimer. Interacts with FHL5. Interacts with CDC34. May interact with TSSK4. In terms of processing, isoform 9 is ubiquitinated by CDC34 and RAD6B in order to be degraded by the proteasome. Stimulated by phosphorylation. Phosphorylated on Ser-116 by TSSK4 in vitro. Expressed in testes (round spermatids) (at protein level). Isoform 14 is the major activator form in testes.

The protein localises to the nucleus. It is found in the cytoplasm. Transcriptional regulator that binds the cAMP response element (CRE), a sequence present in many viral and cellular promoters. Isoforms are either transcriptional activators or repressors. Plays a role in spermatogenesis and is involved in spermatid maturation. Functionally, may play a role in the regulation of the circadian clock: acts as a transcriptional repressor of the core circadian component PER1 by directly binding to cAMP response elements in its promoter. This is cAMP-responsive element modulator from Homo sapiens (Human).